The chain runs to 255 residues: Large ribosomal subunit protein uL4 (255 aa).

This sequence belongs to the universal ribosomal protein uL4 family. As to quaternary structure, part of the 50S ribosomal subunit.

Its function is as follows. One of the primary rRNA binding proteins, this protein initially binds near the 5'-end of the 23S rRNA. It is important during the early stages of 50S assembly. It makes multiple contacts with different domains of the 23S rRNA in the assembled 50S subunit and ribosome. In terms of biological role, forms part of the polypeptide exit tunnel. This chain is Large ribosomal subunit protein uL4, found in Thermococcus kodakarensis (strain ATCC BAA-918 / JCM 12380 / KOD1) (Pyrococcus kodakaraensis (strain KOD1)).